The following is a 214-amino-acid chain: Somatotropin-A (214 aa).

The signal sequence occupies residues 1–25 (MATGFCSSFGLLVVLLLKNVADVGA). 2 cysteine pairs are disulfide-bonded: cysteine 77-cysteine 187 and cysteine 204-cysteine 212.

It belongs to the somatotropin/prolactin family.

Its subcellular location is the secreted. Functionally, growth hormone plays an important role in growth control. The polypeptide is Somatotropin-A (gh-a) (Xenopus laevis (African clawed frog)).